A 520-amino-acid chain; its full sequence is Nonsense-mediated mRNA decay factor SMG9 (520 aa).

3 disordered regions span residues 1 to 94 (MSES…PAPL), 108 to 143 (KGPVAVTGASTPEGTAPPPPAAPAPPKGEKEGQRPT), and 341 to 360 (KPSTPSPSHESSSSSGSDEG). The residue at position 2 (Ser-2) is an N-acetylserine. Phosphoserine occurs at positions 2, 4, 7, 32, and 53. Basic and acidic residues predominate over residues 36–53 (GRERDYIAPWERERRDAS). Pro residues-rich tracts occupy residues 78–94 (QPPPPTAPAAPPAPAPL) and 122–133 (TAPPPPAAPAPP). Residues 342–357 (PSTPSPSHESSSSSGS) show a composition bias toward low complexity. Ser-451 is subject to Phosphoserine.

Belongs to the SMG9 family. Self-associates to form homodimers and forms heterodimers with SMG8; these assembly forms may represent SMG1C intermediate forms. Component of the SMG1C complex composed of SMG1, SMG8 and SMG9. Interacts with DHX34; the interaction is RNA-independent. Post-translationally, phosphorylated by SMG1.

Its function is as follows. Involved in nonsense-mediated decay (NMD) of mRNAs containing premature stop codons. Is recruited by release factors to stalled ribosomes together with SMG1 and SMG8 (forming the SMG1C protein kinase complex) and, in the SMG1C complex, is required for the efficient association between SMG1 and SMG8. Plays a role in brain, heart, and eye development. The protein is Nonsense-mediated mRNA decay factor SMG9 of Homo sapiens (Human).